Reading from the N-terminus, the 622-residue chain is MKTLLIHSDYLEFTAKEKTKIAEDAEILNGKMDECLTVFIAVEKEDESDPVAVIKNAVFEIIKTAGNLNVKNIVVYPYAHLSSDLGSPETAKEILKGIEKELSSSFEVLRAPFGWYKSFKISCKGHPLSELSRKIGTERIEKEKKEKVVSKFYIINGENSELTEVNDELLSKLKDKGLLALLKHELDIKEEGKENGEPPHVKYIKEKEICDYEPSSDAGHFRWYPKGKLIRDLLSDYVYNLVVENGGMPVETPVMYDLQNNAIREHADKFGERQYRFRQGNKDLMLRFAACFGQFMMKKDMYLLPKHLPLKLYELSTYSFRYEQRGELVGLKRLRGFTMPDMHTVCIDMNQAMEAFENQFWMGLKTGDDFKTPYSIIFRFTNEFFEENKEWFFKMAKEYKLKYGKDAILEILPGRKHYWVGKVDMAVVDSFGRPIENPTVQIDVESAQRFGITVHDGDKTIHPIILHCSPTGSIERVLCGLLENAYIKTLEDKPPALPTWLTPIQARVIPVSERNEEFALEVVNKLRESGIRTDFDDREDSMGKKIRNAGTDWVNYVVVIGDNEMESKKLTVTLREESSIKQPKKESLTVGELIEKVTSEIKGSPNRPLPLPMKCSVQPIFR.

Positions 1-134 (MKTLLIHSDY…GHPLSELSRK (134 aa)) are editing domain. A catalytic region spans residues 199 to 498 (PHVKYIKEKE…TLEDKPPALP (300 aa)). Residues Cys291, His343, and His467 each contribute to the Zn(2+) site.

The protein belongs to the class-II aminoacyl-tRNA synthetase family. Homodimer. Zn(2+) serves as cofactor.

Its subcellular location is the cytoplasm. The catalysed reaction is tRNA(Thr) + L-threonine + ATP = L-threonyl-tRNA(Thr) + AMP + diphosphate + H(+). Catalyzes the attachment of threonine to tRNA(Thr) in a two-step reaction: L-threonine is first activated by ATP to form Thr-AMP and then transferred to the acceptor end of tRNA(Thr). Also edits incorrectly charged L-seryl-tRNA(Thr). The chain is Threonine--tRNA ligase from Methanococcus vannielii (strain ATCC 35089 / DSM 1224 / JCM 13029 / OCM 148 / SB).